The sequence spans 135 residues: MGYRKLGRTSSQRKALLRDLATDLIVHERIETTEARAKEIRKVVEKLITSGKKGDLHARRQAAAFIRHEVVEVVQVDAKGKDGSTVKKNRPVYALQKLFDDVAPRYAERQGGYTRILKKGPRRGDGAPMVIIELV.

This sequence belongs to the bacterial ribosomal protein bL17 family. As to quaternary structure, part of the 50S ribosomal subunit. Contacts protein L32.

In Listeria innocua serovar 6a (strain ATCC BAA-680 / CLIP 11262), this protein is Large ribosomal subunit protein bL17.